Consider the following 509-residue polypeptide: Maturase K (509 aa).

Belongs to the intron maturase 2 family. MatK subfamily.

It localises to the plastid. The protein localises to the chloroplast. Its function is as follows. Usually encoded in the trnK tRNA gene intron. Probably assists in splicing its own and other chloroplast group II introns. In Nicotiana acuminata (Acuminate tobacco), this protein is Maturase K.